The sequence spans 195 residues: Peptidyl-tRNA hydrolase (195 aa).

Y17 is a tRNA binding site. The active-site Proton acceptor is H22. TRNA contacts are provided by Y68, N70, and N116.

The protein belongs to the PTH family. As to quaternary structure, monomer.

It is found in the cytoplasm. It catalyses the reaction an N-acyl-L-alpha-aminoacyl-tRNA + H2O = an N-acyl-L-amino acid + a tRNA + H(+). Its function is as follows. Hydrolyzes ribosome-free peptidyl-tRNAs (with 1 or more amino acids incorporated), which drop off the ribosome during protein synthesis, or as a result of ribosome stalling. Catalyzes the release of premature peptidyl moieties from peptidyl-tRNA molecules trapped in stalled 50S ribosomal subunits, and thus maintains levels of free tRNAs and 50S ribosomes. In Shewanella baltica (strain OS155 / ATCC BAA-1091), this protein is Peptidyl-tRNA hydrolase.